The primary structure comprises 932 residues: Protein translocase subunit SecA (932 aa).

ATP-binding positions include glutamine 87, 105–109 (GEGKT), and aspartate 515. Zn(2+) contacts are provided by cysteine 916, cysteine 918, cysteine 927, and histidine 928.

Belongs to the SecA family. In terms of assembly, monomer and homodimer. Part of the essential Sec protein translocation apparatus which comprises SecA, SecYEG and auxiliary proteins SecDF-YajC and YidC. The cofactor is Zn(2+).

The protein resides in the cell inner membrane. Its subcellular location is the cytoplasm. It carries out the reaction ATP + H2O + cellular proteinSide 1 = ADP + phosphate + cellular proteinSide 2.. Functionally, part of the Sec protein translocase complex. Interacts with the SecYEG preprotein conducting channel. Has a central role in coupling the hydrolysis of ATP to the transfer of proteins into and across the cell membrane, serving both as a receptor for the preprotein-SecB complex and as an ATP-driven molecular motor driving the stepwise translocation of polypeptide chains across the membrane. The sequence is that of Protein translocase subunit SecA from Burkholderia orbicola (strain AU 1054).